The following is a 427-amino-acid chain: MDGDEASLVANFCAITNSTPEKAQEYLSVADGDLSTAITLFFESGGVTDVQSSYIEAPSQTEPVEEIRAPIAPTREVLVDPLADMSAGTSIMGNNFGFGGFPRMNRRQRRRMGIFDQSPSQIPFPSSNTEDSSEESDSSSRASRLAKLFRPPYDIISNLSLDEARIEASSQKRWILVNLQTSTSFECQVLNRDLWKDESVKEVIRAHFLFLQLLDDEEPGMEFKRFYPVRSTPHIAILDPRTGERVKEWSKSFTPADFVIALNDFLEGCTLDETSGRKNPLGAKSQKPVEAMSEDEQMHKAIAASLGNGNSTTESQGESSSQQAESHGVADDTVHKIDSAECDAEEPSPGPNVTRIQIRMPNGARFIRRFSLTDPVSKVYAYVKGVAEGADKQPFSLTFQRKSLWTSLDSTIKEAGIQNTALQFEFQ.

Disordered stretches follow at residues 115–143 and 273–331; these read FDQS…SRAS and ETSG…GVAD. Residues 311–326 show a composition bias toward low complexity; the sequence is STTESQGESSSQQAES. The 77-residue stretch at 349 to 425 folds into the UBX domain; the sequence is PGPNVTRIQI…GIQNTALQFE (77 aa). The residue at position 371 (serine 371) is a Phosphoserine.

In terms of assembly, interacts with cdc48.

Involved in CDC48-dependent protein degradation through the ubiquitin/proteasome pathway. In Schizosaccharomyces pombe (strain 972 / ATCC 24843) (Fission yeast), this protein is UBX domain-containing protein 2 (ubx2).